The primary structure comprises 142 residues: Large ribosomal subunit protein uL13 (142 aa).

Belongs to the universal ribosomal protein uL13 family. Part of the 50S ribosomal subunit.

Functionally, this protein is one of the early assembly proteins of the 50S ribosomal subunit, although it is not seen to bind rRNA by itself. It is important during the early stages of 50S assembly. The chain is Large ribosomal subunit protein uL13 from Alcanivorax borkumensis (strain ATCC 700651 / DSM 11573 / NCIMB 13689 / SK2).